We begin with the raw amino-acid sequence, 27 residues long: Morintide mO5 (27 aa).

Residues 1 to 27 (NGLCCSQYGFCGTTSQYCSRANGCQSN) form the Chitin-binding type-1 domain. Cysteine 4 and cysteine 18 are joined by a disulfide.

Seeds (at protein level).

Its function is as follows. Chitin-binding protein which functions in defense against chitin-containing fungal pathogens. This chain is Morintide mO5, found in Moringa oleifera (Horseradish tree).